The primary structure comprises 370 residues: ECF RNA polymerase sigma factor SigG (370 aa).

The segment at 63 to 129 (EPYRRELLAH…LTALEGRRRR (67 aa)) is sigma-70 factor domain-2. Positions 85 to 88 (DLVQ) match the Polymerase core binding motif. A sigma-70 factor domain-4 region spans residues 180-232 (LAFVAALQHLSPRQRAVLLLRDVLQWKSAEVADAIGTSTVAVNSLLQRARSQL). A DNA-binding region (H-T-H motif) is located at residues 207 to 226 (SAEVADAIGTSTVAVNSLLQ).

The protein belongs to the sigma-70 factor family. ECF subfamily. In terms of assembly, interacts transiently with the RNA polymerase catalytic core formed by RpoA, RpoB, RpoC and RpoZ (2 alpha, 1 beta, 1 beta' and 1 omega subunit) to form the RNA polymerase holoenzyme that can initiate transcription.

In terms of biological role, sigma factors are initiation factors that promote the attachment of RNA polymerase to specific initiation sites and are then released. Extracytoplasmic function (ECF) sigma factors are held in an inactive form by a cognate anti-sigma factor until released, although no anti-sigma factor is known for this protein. May be involved in host intracellular survival after infection (strains H37Rv and CDC 1551). A role in the SOS response is controversial; it has been seen in strain CDC 1551 but not in H37Rv. This is ECF RNA polymerase sigma factor SigG (sigG) from Mycobacterium tuberculosis (strain CDC 1551 / Oshkosh).